Consider the following 308-residue polypeptide: UDP-N-acetylenolpyruvoylglucosamine reductase (308 aa).

Residues 37-201 enclose the FAD-binding PCMH-type domain; the sequence is RVGGPAQVLF…TQATFRGTPG (165 aa). R181 is a catalytic residue. Residues 216-233 are compositionally biased toward polar residues; the sequence is SREATQPIKSRTGGSTFK. The segment at 216 to 236 is disordered; sequence SREATQPIKSRTGGSTFKNPP. S230 serves as the catalytic Proton donor. Residue E300 is part of the active site.

The protein belongs to the MurB family. It depends on FAD as a cofactor.

The protein localises to the cytoplasm. The catalysed reaction is UDP-N-acetyl-alpha-D-muramate + NADP(+) = UDP-N-acetyl-3-O-(1-carboxyvinyl)-alpha-D-glucosamine + NADPH + H(+). It functions in the pathway cell wall biogenesis; peptidoglycan biosynthesis. In terms of biological role, cell wall formation. The polypeptide is UDP-N-acetylenolpyruvoylglucosamine reductase (Azorhizobium caulinodans (strain ATCC 43989 / DSM 5975 / JCM 20966 / LMG 6465 / NBRC 14845 / NCIMB 13405 / ORS 571)).